The primary structure comprises 303 residues: MGNRVEFAKMNGLGNKILVVDMRGRADRVMPQAAIALAGNAETHFDQIMAIHDPKLAGTFAYIDIINCDGTLAQACGNGTRCVVQALSAETGLKAFTFQTLAGILNAVEHDDRTVSVDMGSPVFDWNRIPLSEEFHDTSRIELQIGPIDAPVLHSPAVMSMGNPHAVFWVDRDPMSYDLERFGPLLENHPLFPEKANITLAQVTSRTTMTTRTWERGAGLTLACGSAACAAGVSAARTGRAERKVTITVASSPNRQALDIEWRERDGHVIMTGAAEWEWAGQLDPQTGDWQREQQAGHEASVS.

N15, Q47, and N67 together coordinate substrate. C76 acts as the Proton donor in catalysis. Substrate-binding positions include 77 to 78 (GN), N163, N197, and 215 to 216 (ER). The Proton acceptor role is filled by C224. 225-226 (GS) is a binding site for substrate.

The protein belongs to the diaminopimelate epimerase family. In terms of assembly, homodimer.

It is found in the cytoplasm. It catalyses the reaction (2S,6S)-2,6-diaminopimelate = meso-2,6-diaminopimelate. Its pathway is amino-acid biosynthesis; L-lysine biosynthesis via DAP pathway; DL-2,6-diaminopimelate from LL-2,6-diaminopimelate: step 1/1. Catalyzes the stereoinversion of LL-2,6-diaminopimelate (L,L-DAP) to meso-diaminopimelate (meso-DAP), a precursor of L-lysine and an essential component of the bacterial peptidoglycan. The polypeptide is Diaminopimelate epimerase (Allorhizobium ampelinum (strain ATCC BAA-846 / DSM 112012 / S4) (Agrobacterium vitis (strain S4))).